A 519-amino-acid chain; its full sequence is uncharacterized protein (519 aa).

11 helical membrane passes run 52–72, 86–106, 119–139, 156–176, 199–219, 231–251, 313–333, 343–363, 374–394, 408–430, and 477–497; these read IYFL…VRGS, LATY…SPIV, TWVV…SYNV, WSFL…GWSL, FFLS…NTFI, LSGY…LVCF, MLSL…VYTG, IWLK…ILVY, VFFP…IQFV, IGGT…PQYV, and TSIV…TPVV.

The protein resides in the membrane. This is an uncharacterized protein from Schizosaccharomyces pombe (strain 972 / ATCC 24843) (Fission yeast).